A 70-amino-acid polypeptide reads, in one-letter code: Conotoxin Lt3.4 (70 aa).

Residues 1 to 24 (MLKMGVLLFTFLVLFPLAMFQLDA) form the signal peptide. Residues 25–54 (DQPVERYAENKQDLNRDERMKIMLSALRQR) constitute a propeptide that is removed on maturation. The residue at position 55 (Gln-55) is a Pyrrolidone carboxylic acid. Cystine bridges form between Cys-56–Cys-68, Cys-57–Cys-66, and Cys-62–Cys-69.

It belongs to the conotoxin M superfamily. As to expression, expressed by the venom duct.

It is found in the secreted. This is Conotoxin Lt3.4 from Conus litteratus (Lettered cone).